The following is a 348-amino-acid chain: Tocopherol O-methyltransferase, chloroplastic (348 aa).

The N-terminal 51 residues, 1–51 (MKATLAAPSSLTSLPYRTNSSFGSKSSLLFRSPSSSSSVSMTTTRGNVAVA), are a transit peptide targeting the chloroplast. Ala-52 is modified (N-acetylalanine). Positions 130 to 139 (VVDVGCGIGG) are SAM motif I. Residues 193–201 (GKFDLVWSM) form an SAM motif II region. An SAM motif III region spans residues 220-229 (VAAPGGRIII).

It belongs to the class I-like SAM-binding methyltransferase superfamily. gTMT family.

The protein localises to the plastid. It is found in the chloroplast. It carries out the reaction gamma-tocopherol + S-adenosyl-L-methionine = (+)-alpha-tocopherol + S-adenosyl-L-homocysteine + H(+). The enzyme catalyses delta-tocotrienol + S-adenosyl-L-methionine = beta-tocotrienol + S-adenosyl-L-homocysteine + H(+). It catalyses the reaction gamma-tocotrienol + S-adenosyl-L-methionine = alpha-tocotrienol + S-adenosyl-L-homocysteine + H(+). The catalysed reaction is delta-tocopherol + S-adenosyl-L-methionine = beta-tocopherol + S-adenosyl-L-homocysteine + H(+). The protein operates within cofactor biosynthesis; tocopherol biosynthesis. Functionally, involved in the synthesis of tocopherol (vitamin E). Methylates gamma- and delta-tocopherol to form beta- and alpha-tocopherol, respectively. This Arabidopsis thaliana (Mouse-ear cress) protein is Tocopherol O-methyltransferase, chloroplastic (VTE4).